The primary structure comprises 1701 residues: Rho guanine nucleotide exchange factor TIAM2 (1701 aa).

Disordered regions lie at residues 1–21 (MGNSDSQYTLQGSKNHSNTIT), 201–250 (SPTL…SSWY), 265–293 (GSFLAPGMPDPSLHASFPPGDAKKPFNQS), and 389–417 (SLSRKKRKLQEPRSKEGSDYFDSRSDGLN). A lipid anchor (N-myristoyl glycine) is attached at G2. A compositionally biased stretch (low complexity) spans 238-248 (SKGSSLSSESS). The segment covering 397–413 (LQEPRSKEGSDYFDSRS) has biased composition (basic and acidic residues). A PH 1 domain is found at 506-620 (VVRKAGWLFF…WVTAVHSACA (115 aa)). The stretch at 628 to 695 (GKEDTLRLLK…KFHMDLFRMR (68 aa)) forms a coiled coil. Residues 810 to 881 (IQTYVHFQDN…YMQQQVYDEI (72 aa)) enclose the RBD domain. A PDZ domain is found at 890–976 (DVQLTKTGSV…GLTLIARPPD (87 aa)). The segment at 1070 to 1092 (DSQANGMEGPRENQDPPPRSLAR) is disordered. Residues 1099–1293 (RLRKVIQELV…EKVASHINEM (195 aa)) form the DH domain. A PH 2 domain is found at 1347–1478 (DLELTVFVFK…EKTCKDRLVP (132 aa)). 2 disordered regions span residues 1500–1556 (NSSS…GLAD) and 1568–1628 (LSDE…PKLV). Positions 1513 to 1527 (GTLLDSDEGSLSSGT) are enriched in low complexity. S1583 carries the post-translational modification Phosphoserine. The span at 1596 to 1607 (RISEDPDVHPEA) shows a compositional bias: basic and acidic residues. T1648 carries the post-translational modification Phosphothreonine.

It belongs to the TIAM family. In terms of assembly, interacts with MAP1A, MAP1B, PARP1 and YWHAE. Interacts with CD44, PARD3 and MAPK8IP2. Post-translationally, phosphorylated on serine and threonine residues. Phosphorylated on Thr-1648 by Rho-kinase. Its phosphorylation by Rho-kinase inhibits its guanine nucleotide exchange activity, its interaction with MAP1A, MAP1B, PARP1 and YWHAE and reduces its ability to promote neurite growth. In terms of tissue distribution, expressed in the occipital, frontal and temporal lobes, cerebellum, putamen and testis.

The protein localises to the cytoplasm. Its subcellular location is the cell projection. It is found in the lamellipodium. It localises to the filopodium. The protein resides in the growth cone. The protein localises to the neuron projection. Its subcellular location is the perikaryon. Its function is as follows. Modulates the activity of RHO-like proteins and connects extracellular signals to cytoskeletal activities. Acts as a GDP-dissociation stimulator protein that stimulates the GDP-GTP exchange activity of RHO-like GTPases and activates them. Mediates extracellular laminin signals to activate Rac1, contributing to neurite growth. Involved in lamellipodial formation and advancement of the growth cone of embryonic hippocampal neurons. Promotes migration of neurons in the cerebral cortex. When overexpressed, induces membrane ruffling accompanied by the accumulation of actin filaments along the altered plasma membrane. Activates specifically RAC1, but not CDC42 and RHOA. This chain is Rho guanine nucleotide exchange factor TIAM2 (TIAM2), found in Homo sapiens (Human).